Here is a 361-residue protein sequence, read N- to C-terminus: Adenosine kinase (361 aa).

A Nuclear localization signal motif is present at residues 7 to 15 (PKPKKLKVE). An adenosine-binding site is contributed by aspartate 34. Serine 48 is a Mg(2+) binding site. Tyrosine 76 is modified (phosphotyrosine). Asparagine 147 provides a ligand contact to Mg(2+). Glutamine 305 serves as a coordination point for adenosine. Aspartate 316 is an active-site residue. Aspartate 316 serves as the catalytic Proton acceptor.

This sequence belongs to the carbohydrate kinase PfkB family. Monomer. The cofactor is Mg(2+).

The protein resides in the nucleus. It catalyses the reaction adenosine + ATP = AMP + ADP + H(+). It participates in purine metabolism; AMP biosynthesis via salvage pathway; AMP from adenosine: step 1/1. Its function is as follows. Catalyzes the phosphorylation of the purine nucleoside adenosine at the 5' position in an ATP-dependent manner. Serves as a potential regulator of concentrations of extracellular adenosine and intracellular adenine nucleotides. This Rattus norvegicus (Rat) protein is Adenosine kinase (Adk).